The sequence spans 147 residues: UPF0178 protein Tgr7_2584 (147 aa).

Belongs to the UPF0178 family.

In Thioalkalivibrio sulfidiphilus (strain HL-EbGR7), this protein is UPF0178 protein Tgr7_2584.